Here is a 236-residue protein sequence, read N- to C-terminus: CD81 antigen (236 aa).

The Cytoplasmic segment spans residues 1–12 (MGVEGCTKCIKY). A helical membrane pass occupies residues 13-33 (LLFVFNFVFWLAGGVILGVAL). At 34–63 (WLRHDPQTTTLLYLELGDKPAPSTFYVGIY) the chain is on the extracellular side. Residues 64–84 (ILIAVGAVMMFVGFLGCYGAI) form a helical membrane-spanning segment. Residues 85–89 (QESQC) are Cytoplasmic-facing. A helical membrane pass occupies residues 90–112 (LLGTFFTCLVILFACEVAAGIWG). The Extracellular portion of the chain corresponds to 113–201 (FVNKDQIAKD…QKIDELFSGK (89 aa)). Intrachain disulfides connect Cys-156/Cys-190 and Cys-157/Cys-175. A helical membrane pass occupies residues 202–224 (LYLIGIAAIVVAVIMIFEMILSM). Glu-219 lines the cholesterol pocket. Topologically, residues 225–236 (VLCCGIRNSSVY) are cytoplasmic.

This sequence belongs to the tetraspanin (TM4SF) family. Homodimer. Part of a complex composed of CD19, CR2/CD21, CD81 and IFITM1/CD225 in the membrane of mature B cells. Interacts (via the second extracellular domain) with CD19; this interaction is initiated early during biosynthesis in the ER and enables trafficking of only properly folded CD19. Part of a complex that includes MHC class II/HLA-DR molecules and IFITM1. Interacts with IFITM1. Interacts with IFITM2 and IFITM3. Part of integrin-tetraspanin complex composed of CD9, CD81, beta-1 and beta-2 integrins in the membrane of monocyte/macrophages. Interacts (via the second extracellular domain) with integrin ITGAV:ITGB3. Interacts with CD247/CD3 zeta, ICAM1 and CD9 at the immune synapse on T cell membrane. Part of a GPCR-tetraspanin complex consisting at least of ADGRG1, CD81, possibly CD9, and GNA11 in which CD81 enhances the association of ADGRG1 with GNA11. Part of a complex composed of CD9, CD81, PTGFRN and IGSF8. Interacts directly with IGSF8. Interacts with CD53 and SCIMP. Interacts with SAMHD1 (via its C-terminus). Interacts with glypican GPC3 and with the transcriptional repressor HHEX; binding to GPC3 decreases the availability of free CD81 for binding to HHEX, resulting in nuclear translocation of HHEX and transcriptional repression. Interacts with CLDN1. Interacts with CLDN6 and CLDN9. In terms of processing, not glycosylated. Post-translationally, likely constitutively palmitoylated at low levels. Protein palmitoylation is up-regulated upon coligation of BCR and CD9-C2R-CD81 complexes in lipid rafts.

It localises to the cell membrane. The protein resides in the basolateral cell membrane. Functionally, structural component of specialized membrane microdomains known as tetraspanin-enriched microdomains (TERMs), which act as platforms for receptor clustering and signaling. Essential for trafficking and compartmentalization of CD19 receptor on the surface of activated B cells. Upon initial encounter with microbial pathogens, enables the assembly of CD19-CR2/CD21 and B cell receptor (BCR) complexes at signaling TERMs, lowering the threshold dose of antigen required to trigger B cell clonal expansion and antibody production. In T cells, facilitates the localization of CD247/CD3 zeta at antigen-induced synapses with B cells, providing for costimulation and polarization toward T helper type 2 phenotype. Present in MHC class II compartments, may also play a role in antigen presentation. Can act both as positive and negative regulator of homotypic or heterotypic cell-cell fusion processes. Positively regulates sperm-egg fusion and may be involved in acrosome reaction. In myoblasts, associates with CD9 and PTGFRN and inhibits myotube fusion during muscle regeneration. In macrophages, associates with CD9 and beta-1 and beta-2 integrins, and prevents macrophage fusion into multinucleated giant cells specialized in ingesting complement-opsonized large particles. Also prevents the fusion of mononuclear cell progenitors into osteoclasts in charge of bone resorption. May regulate the compartmentalization of enzymatic activities. In T cells, defines the subcellular localization of dNTPase SAMHD1 and permits its degradation by the proteasome, thereby controlling intracellular dNTP levels. Also involved in cell adhesion and motility. Positively regulates integrin-mediated adhesion of macrophages, particularly relevant for the inflammatory response in the lung. In Rattus norvegicus (Rat), this protein is CD81 antigen (Cd81).